The sequence spans 528 residues: Probable histone-arginine methyltransferase CARM1 (528 aa).

The SAM-dependent MTase PRMT-type domain occupies 149–464; that stretch reads EASSAKMYFH…QSYTIYLTMS (316 aa). Glutamine 166, arginine 175, glycine 199, glutamate 221, glutamate 251, and serine 279 together coordinate S-adenosyl-L-methionine. A compositionally biased stretch (low complexity) spans 500–520; sequence YVMQQDQQQQQLPSLQPQSPL. Positions 500–528 are disordered; sequence YVMQQDQQQQQLPSLQPQSPLWDYHYGQD.

This sequence belongs to the class I-like SAM-binding methyltransferase superfamily. Protein arginine N-methyltransferase family.

It is found in the nucleus. The protein resides in the cytoplasm. The enzyme catalyses L-arginyl-[protein] + 2 S-adenosyl-L-methionine = N(omega),N(omega)-dimethyl-L-arginyl-[protein] + 2 S-adenosyl-L-homocysteine + 2 H(+). Methylates (mono- and asymmetric dimethylation) the guanidino nitrogens of arginyl residues in several proteins involved in DNA packaging, transcription regulation, and mRNA stability. Recruited to promoters upon gene activation, methylates histone H3 and activates transcription via chromatin remodeling. In Oryza sativa subsp. indica (Rice), this protein is Probable histone-arginine methyltransferase CARM1 (CARM1).